The chain runs to 185 residues: Ribosome-recycling factor (185 aa).

Belongs to the RRF family.

The protein resides in the cytoplasm. Functionally, responsible for the release of ribosomes from messenger RNA at the termination of protein biosynthesis. May increase the efficiency of translation by recycling ribosomes from one round of translation to another. The polypeptide is Ribosome-recycling factor (Marinomonas sp. (strain MWYL1)).